Here is a 389-residue protein sequence, read N- to C-terminus: Jasmonate O-methyltransferase (389 aa).

Tyr18 serves as a coordination point for S-adenosyl-L-homocysteine. Gln25 contributes to the jasmonate binding site. S-adenosyl-L-homocysteine contacts are provided by Cys60, Asn65, Asp97, Leu98, Ser142, and Phe143. Residues His163 and Trp164 each contribute to the jasmonate site. Mg(2+) contacts are provided by Asn186, Asp272, Phe274, and Asn275.

Belongs to the methyltransferase superfamily. Type-7 methyltransferase family. Mg(2+) serves as cofactor. Expressed in rosettes, cauline leaves and developing flowers but not in young seedlings.

The protein localises to the cytoplasm. The protein resides in the nucleus. The catalysed reaction is jasmonate + S-adenosyl-L-methionine = methyl (-)-jasmonate + S-adenosyl-L-homocysteine. The protein operates within lipid metabolism; oxylipin biosynthesis. Catalyzes the methylation of jasmonate into methyljasmonate, a plant volatile that acts as an important cellular regulator mediating diverse developmental processes and defense responses. The polypeptide is Jasmonate O-methyltransferase (Arabidopsis thaliana (Mouse-ear cress)).